The following is a 476-amino-acid chain: Protein transport protein Sec61 subunit alpha (476 aa).

Topologically, residues 2-33 (GIKFLEVIKPFCAVLPEIQKPERKIQFREKVL) are cytoplasmic. The chain crosses the membrane as a helical span at residues 34–53 (WTAITLFIFLVCCQIPLFGI). Residues 54 to 76 (MSSDSADPFYWMRVILASNRGTL) are Lumenal-facing. The helical transmembrane segment at 77–96 (MELGISPIVTSGLIMQLLAG) threads the bilayer. At 97-117 (AKIIEVGDTPKDRALFNGAQK) the chain is on the cytoplasmic side. Residues 118 to 138 (LFGMIITIGQAIVYVMTGMYG) form a helical membrane-spanning segment. Over 139–144 (DPSEMG) the chain is Lumenal. The helical transmembrane segment at 145–165 (AGICLVIIIQLFVAGLIVLLL) threads the bilayer. Topologically, residues 166 to 172 (DELLQKG) are cytoplasmic. The chain crosses the membrane as a helical span at residues 173-193 (YGLGSGISLFIATNICETIVW). Residues 194 to 240 (KAFSPTTVNTGRGTEFEGAIIALFHLLATRTDKVRALREAFYRQNLP) are Lumenal-facing. Residues 241–261 (NLMNLIATVFVFAVVIYFQGF) traverse the membrane as a helical segment. Topologically, residues 262-288 (RVDLPIKSARYRGQYNTYPIKLFYTSN) are cytoplasmic. Residues 289-309 (IPIILQSALVSNLYVISQMLS) traverse the membrane as a helical segment. Residues 310–354 (TRFSGNFLVNLLGTWSDTSTGGPARAYPVGGLCYYFSPPESFGSV) lie on the Lumenal side of the membrane. A helical membrane pass occupies residues 355–375 (LDDPVHASIYIVFMLGSCAFF). At 376–420 (SKTWIEVSGSSAKDVAKQLKEQQMVMRGHRETSMVHELNRYIPTA) the chain is on the cytoplasmic side. A helical membrane pass occupies residues 421-441 (AAFGGLCIGGLSVMADFLGAI). Residues 442–445 (GSGT) lie on the Lumenal side of the membrane. The chain crosses the membrane as a helical span at residues 446-462 (GILLAVTIIYQYFEIFV). At 463 to 476 (KEQSEMGSMGALLF) the chain is on the cytoplasmic side.

The protein belongs to the SecY/SEC61-alpha family. The SEC61 channel-forming translocon complex consists of channel-forming core components SEC61A1, SEC61B and SEC61G and different auxiliary components such as SEC62 and SEC63. The SEC61 channel associates with the multi-pass translocon (MPT) complex.

Its subcellular location is the endoplasmic reticulum membrane. Functionally, component of SEC61 channel-forming translocon complex that mediates transport of signal peptide-containing precursor polypeptides across the endoplasmic reticulum (ER). Forms a ribosome receptor and a gated pore in the ER membrane, both functions required for cotranslational translocation of nascent polypeptides. May cooperate with auxiliary protein SEC62, SEC63 and HSPA5/BiP to enable post-translational transport of small presecretory proteins. The SEC61 channel is also involved in ER membrane insertion of transmembrane proteins: it mediates membrane insertion of the first few transmembrane segments of proteins, while insertion of subsequent transmembrane regions of multi-pass membrane proteins is mediated by the multi-pass translocon (MPT) complex. The polypeptide is Protein transport protein Sec61 subunit alpha (sec61a) (Gadus ogac (Greenland cod)).